A 546-amino-acid chain; its full sequence is Chaperonin GroEL 1 (546 aa).

Residues 30 to 33 (TLGP), Lys51, 87 to 91 (DGTTT), Gly415, 479 to 481 (NAA), and Asp495 contribute to the ATP site. Residues 526–546 (KEDAPMPGGMPGGMGGMGMDM) are disordered. Residues 534–546 (GMPGGMGGMGMDM) show a composition bias toward gly residues.

It belongs to the chaperonin (HSP60) family. In terms of assembly, forms a cylinder of 14 subunits composed of two heptameric rings stacked back-to-back. Interacts with the co-chaperonin GroES.

It is found in the cytoplasm. The catalysed reaction is ATP + H2O + a folded polypeptide = ADP + phosphate + an unfolded polypeptide.. Together with its co-chaperonin GroES, plays an essential role in assisting protein folding. The GroEL-GroES system forms a nano-cage that allows encapsulation of the non-native substrate proteins and provides a physical environment optimized to promote and accelerate protein folding. The sequence is that of Chaperonin GroEL 1 from Burkholderia ambifaria (strain ATCC BAA-244 / DSM 16087 / CCUG 44356 / LMG 19182 / AMMD) (Burkholderia cepacia (strain AMMD)).